The chain runs to 127 residues: Major sperm protein 19/31/40/45/50/51/53/59/61/65/81/113/142 (127 aa).

Alanine 2 bears the N-acetylalanine mark. Residues 9-126 (DIQTQPGTKI…RRKNLPIEYN (118 aa)) form the MSP domain.

Helical subfilaments are built from MSP dimers; filaments are formed from two subfilaments coiling round one another; and filaments themselves supercoil to produce bundles. As to expression, sperm.

Its subcellular location is the cell projection. The protein resides in the pseudopodium. It is found in the cytoplasm. It localises to the cytoskeleton. Its function is as follows. Central component in molecular interactions underlying sperm crawling. Forms an extensive filament system that extends from sperm villipoda, along the leading edge of the pseudopod. This is Major sperm protein 19/31/40/45/50/51/53/59/61/65/81/113/142 (msp-19) from Caenorhabditis elegans.